We begin with the raw amino-acid sequence, 281 residues long: MLAKVTFLSCITMSDFTFSGYELACFVTHSGLSRSAGHILSQCANLAATTSEYFIHKPHRLIAAETGYSQSTVVRAFREAVNKGILSVEIVIGDHRERRANLYRFTPSFLAFAQQAKNALIESKLKISSAATKVKAVLAKTLALFNFLSTPPCQNDTPSPCQDDVAIKNKKSQVKKTKRSVSGGAGTTSLKKLTSWIAKAKAKADNLRLSKKRTQKHEFKQKVEAAARKYAYLKNKRSPDIGGISNFDNLPHCMTVNEALNAVLAKNKDNEQWGIPAGFRG.

Essential for L-replicon function. Necessary for initiation of DNA replication from the L-replicon at oriL. In Enterobacteriaceae (Bacteriophage P1), this protein is Replication protein repL (repL).